The sequence spans 318 residues: Myoblast determination protein 1 (318 aa).

M1 is covalently cross-linked (Peptide (Met-Gly) (interchain with G-Cter in ubiquitin)). K104 carries the post-translational modification N6-methyllysine; by EHMT2. Residues 109–160 enclose the bHLH domain; sequence DRRKAATMRERRRLSKVNEAFETLKRCTSSNPNQRLPKVEILRNAIRYIEGL. 2 disordered regions span residues 175–225 and 265–318; these read AAFY…QNGY and APAL…YQVL. A compositionally biased stretch (polar residues) spans 196–206; sequence SDASSPRSNCS. Residues 265-274 show a composition bias toward low complexity; that stretch reads APALLLADAP. 2 stretches are compositionally biased toward polar residues: residues 287 to 298 and 307 to 318; these read LSDTEQGTQTPS and AGSNPNAIYQVL.

Interacts with SUV39H1. Efficient DNA binding requires dimerization with another bHLH protein. Seems to form active heterodimers with ITF-2. Interacts with DDX5. Interacts with CHD2. Interacts with TSC22D3 isoform 1 and isoform 4. Interacts with SETD3. Interacts with P-TEFB complex; promotes the transcriptional activity of MYOD1 through its CDK9-mediated phosphorylation. Interacts with CSRP3. Interacts with NUPR1. Post-translationally, acetylated by a complex containing EP300 and PCAF. The acetylation is essential to activate target genes. Conversely, its deacetylation by SIRT1 inhibits its function. In terms of processing, ubiquitinated on the N-terminus; which is required for proteasomal degradation. Phosphorylated by CDK9. This phosphorylation promotes its function in muscle differentiation. Post-translationally, methylation at Lys-104 by EHMT2/G9a inhibits myogenic activity.

The protein resides in the nucleus. Functionally, acts as a transcriptional activator that promotes transcription of muscle-specific target genes and plays a role in muscle differentiation. Together with MYF5 and MYOG, co-occupies muscle-specific gene promoter core region during myogenesis. Induces fibroblasts to differentiate into myoblasts. Interacts with and is inhibited by the twist protein. This interaction probably involves the basic domains of both proteins. The polypeptide is Myoblast determination protein 1 (Myod1) (Mus musculus (Mouse)).